We begin with the raw amino-acid sequence, 1503 residues long: DNA-directed RNA polymerase subunit beta' (1503 aa).

The Zn(2+) site is built by cysteine 71, cysteine 73, cysteine 86, and cysteine 89. Positions 470, 472, and 474 each coordinate Mg(2+). Residues cysteine 800, cysteine 874, cysteine 881, and cysteine 884 each coordinate Zn(2+).

This sequence belongs to the RNA polymerase beta' chain family. The RNAP catalytic core consists of 2 alpha, 1 beta, 1 beta' and 1 omega subunit. When a sigma factor is associated with the core the holoenzyme is formed, which can initiate transcription. Mg(2+) serves as cofactor. It depends on Zn(2+) as a cofactor.

The enzyme catalyses RNA(n) + a ribonucleoside 5'-triphosphate = RNA(n+1) + diphosphate. Its function is as follows. DNA-dependent RNA polymerase catalyzes the transcription of DNA into RNA using the four ribonucleoside triphosphates as substrates. In Sulfurimonas denitrificans (strain ATCC 33889 / DSM 1251) (Thiomicrospira denitrificans (strain ATCC 33889 / DSM 1251)), this protein is DNA-directed RNA polymerase subunit beta'.